The primary structure comprises 513 residues: ATP synthase subunit alpha (513 aa).

Position 169-176 (Gly169–Thr176) interacts with ATP.

The protein belongs to the ATPase alpha/beta chains family. As to quaternary structure, F-type ATPases have 2 components, CF(1) - the catalytic core - and CF(0) - the membrane proton channel. CF(1) has five subunits: alpha(3), beta(3), gamma(1), delta(1), epsilon(1). CF(0) has three main subunits: a(1), b(2) and c(9-12). The alpha and beta chains form an alternating ring which encloses part of the gamma chain. CF(1) is attached to CF(0) by a central stalk formed by the gamma and epsilon chains, while a peripheral stalk is formed by the delta and b chains.

It is found in the cell inner membrane. It catalyses the reaction ATP + H2O + 4 H(+)(in) = ADP + phosphate + 5 H(+)(out). Its function is as follows. Produces ATP from ADP in the presence of a proton gradient across the membrane. The alpha chain is a regulatory subunit. The polypeptide is ATP synthase subunit alpha (Vesicomyosocius okutanii subsp. Calyptogena okutanii (strain HA)).